The following is a 59-amino-acid chain: Large ribosomal subunit protein uL30 (59 aa).

This sequence belongs to the universal ribosomal protein uL30 family. Part of the 50S ribosomal subunit.

This Staphylococcus saprophyticus subsp. saprophyticus (strain ATCC 15305 / DSM 20229 / NCIMB 8711 / NCTC 7292 / S-41) protein is Large ribosomal subunit protein uL30.